The chain runs to 216 residues: Superoxide dismutase [Cu-Zn], chloroplastic (216 aa).

Residues methionine 1–alanine 62 constitute a chloroplast transit peptide. Histidine 108, histidine 110, and histidine 125 together coordinate Cu cation. Cysteine 119 and cysteine 208 are joined by a disulfide. Positions 125, 133, 142, and 145 each coordinate Zn(2+). Histidine 182 lines the Cu cation pocket.

It belongs to the Cu-Zn superoxide dismutase family. In terms of assembly, homotetramer. Requires Cu cation as cofactor. Zn(2+) is required as a cofactor.

Its subcellular location is the plastid. The protein resides in the chloroplast. It catalyses the reaction 2 superoxide + 2 H(+) = H2O2 + O2. In terms of biological role, destroys radicals which are normally produced within the cells and which are toxic to biological systems. The sequence is that of Superoxide dismutase [Cu-Zn], chloroplastic (SODCP) from Zantedeschia aethiopica (White calla lily).